Reading from the N-terminus, the 263-residue chain is Endonuclease 8 (263 aa).

The Schiff-base intermediate with DNA role is filled by Pro-2. Catalysis depends on Glu-3, which acts as the Proton donor. Residue Lys-53 is the Proton donor; for beta-elimination activity of the active site. Positions 70, 125, and 169 each coordinate DNA. An FPG-type zinc finger spans residues 229 to 263 (KVFHRDGELCERCGGIIEKTTLSSRPFYWCPGCQH). Arg-253 functions as the Proton donor; for delta-elimination activity in the catalytic mechanism.

The protein belongs to the FPG family. Zn(2+) is required as a cofactor.

The enzyme catalyses 2'-deoxyribonucleotide-(2'-deoxyribose 5'-phosphate)-2'-deoxyribonucleotide-DNA = a 3'-end 2'-deoxyribonucleotide-(2,3-dehydro-2,3-deoxyribose 5'-phosphate)-DNA + a 5'-end 5'-phospho-2'-deoxyribonucleoside-DNA + H(+). Functionally, involved in base excision repair of DNA damaged by oxidation or by mutagenic agents. Acts as a DNA glycosylase that recognizes and removes damaged bases. Has a preference for oxidized pyrimidines, such as thymine glycol, 5,6-dihydrouracil and 5,6-dihydrothymine. Has AP (apurinic/apyrimidinic) lyase activity and introduces nicks in the DNA strand. Cleaves the DNA backbone by beta-delta elimination to generate a single-strand break at the site of the removed base with both 3'- and 5'-phosphates. This Escherichia coli O7:K1 (strain IAI39 / ExPEC) protein is Endonuclease 8.